Here is a 320-residue protein sequence, read N- to C-terminus: Heterogeneous nuclear ribonucleoprotein A1 (320 aa).

Position 1 is an N-acetylmethionine (Met-1). Ser-2 carries the N-acetylserine; in Heterogeneous nuclear ribonucleoprotein A1, N-terminally processed modification. The residue at position 2 (Ser-2) is a Phosphoserine. N6-acetyllysine; alternate is present on Lys-3. Lys-3 is covalently cross-linked (Glycyl lysine isopeptide (Lys-Gly) (interchain with G-Cter in SUMO2); alternate). Phosphoserine is present on residues Ser-4 and Ser-6. Residues 4-94 are globular A domain; it reads SESPKEPEQL…EPKRAVSRED (91 aa). Lys-8 participates in a covalent cross-link: Glycyl lysine isopeptide (Lys-Gly) (interchain with G-Cter in SUMO2). RRM domains lie at 14–97 and 105–184; these read RKLF…DSQR and KKIF…LSKQ. A Phosphoserine modification is found at Ser-22. Lys-78 participates in a covalent cross-link: Glycyl lysine isopeptide (Lys-Gly) (interchain with G-Cter in SUMO2). A globular B domain region spans residues 95-185; the sequence is SQRPGAHLTV…EVRKALSKQE (91 aa). A Glycyl lysine isopeptide (Lys-Gly) (interchain with G-Cter in SUMO) cross-link involves residue Lys-113. Residues Lys-179 and Lys-183 each participate in a glycyl lysine isopeptide (Lys-Gly) (interchain with G-Cter in SUMO2) cross-link. The disordered stretch occupies residues 182-216; the sequence is SKQEMASASSSQRGRSGSGNFGGGRGGGFGGNDNF. Phosphoserine; by MKNK2 is present on Ser-192. Arg-194 carries the post-translational modification Asymmetric dimethylarginine; alternate. A Dimethylated arginine; alternate modification is found at Arg-194. The residue at position 194 (Arg-194) is an Omega-N-methylarginine; alternate. Residues 197–216 show a composition bias toward gly residues; the sequence is SGSGNFGGGRGGGFGGNDNF. A Phosphoserine modification is found at Ser-199. Asymmetric dimethylarginine; alternate occurs at positions 206, 218, 225, and 232. Arg-206 is modified (dimethylated arginine; alternate). Omega-N-methylarginine; alternate is present on residues Arg-206, Arg-218, Arg-225, and Arg-232. The tract at residues 218-240 is RNA-binding RGG-box; sequence RGGNFSGRGGFGGSRGGGGYGGS. Arg-225 is subject to Dimethylated arginine; alternate. The tract at residues 268-305 is nuclear targeting sequence; it reads NQSSNFGPMKGGNFGGRSLGPYGGGGQYFAKPRNQGGY. Over residues 277 to 294 the composition is skewed to gly residues; it reads KGGNFGGRSLGPYGGGGQ. The disordered stretch occupies residues 277–320; it reads KGGNFGGRSLGPYGGGGQYFAKPRNQGGYGGSSSSSSYGSGRRF. At Arg-284 the chain carries Omega-N-methylarginine. Ser-285 is modified (phosphoserine). Lys-298 is subject to N6-acetyllysine; alternate. Lys-298 is covalently cross-linked (Glycyl lysine isopeptide (Lys-Gly) (interchain with G-Cter in SUMO2); alternate). Arg-300 bears the Omega-N-methylarginine mark. The span at 308–320 shows a compositional bias: low complexity; it reads SSSSSSYGSGRRF. Ser-309 is subject to Phosphoserine. Residues Ser-310, Ser-311, and Ser-312 each carry the phosphoserine; by MKNK2 modification. A phosphoserine mark is found at Ser-313 and Ser-316. Arg-318 is modified (omega-N-methylarginine).

In terms of assembly, identified in the spliceosome C complex. Identified in a IGF2BP1-dependent mRNP granule complex containing untranslated mRNAs. Interacts with SEPT6, C9orf72, KHDRBS1, UBQLN2. Interacts with PPIA/CYPA. Sumoylated.

It is found in the nucleus. The protein resides in the cytoplasm. Its function is as follows. Involved in the packaging of pre-mRNA into hnRNP particles, transport of poly(A) mRNA from the nucleus to the cytoplasm and modulation of splice site selection. Plays a role in the splicing of pyruvate kinase PKM by binding repressively to sequences flanking PKM exon 9, inhibiting exon 9 inclusion and resulting in exon 10 inclusion and production of the PKM M2 isoform. Binds to the IRES and thereby inhibits the translation of the apoptosis protease activating factor APAF1. May bind to specific miRNA hairpins. This chain is Heterogeneous nuclear ribonucleoprotein A1 (HNRNPA1), found in Macaca mulatta (Rhesus macaque).